The sequence spans 788 residues: Multifunctional tryptophan biosynthesis protein (788 aa).

The region spanning 12 to 207 (DILMIDNFDS…MKLKGGTWEE (196 aa)) is the Glutamine amidotransferase type-1 domain. Position 63-65 (63-65 (GPG)) interacts with L-glutamine. C91 (nucleophile; for GATase activity) is an active-site residue. 141–142 (SL) serves as a coordination point for L-glutamine. Residues H181 and E183 each act as for GATase activity in the active site. Residues 238–503 (ILEKICAQRQ…DTRAFIRQLL (266 aa)) form an indole-3-glycerol phosphate synthase region. The tract at residues 520 to 788 (LSRSCGIRTE…RAFVKAAKKL (269 aa)) is N-(5'-phosphoribosyl)anthranilate isomerase.

The enzyme catalyses N-(5-phospho-beta-D-ribosyl)anthranilate = 1-(2-carboxyphenylamino)-1-deoxy-D-ribulose 5-phosphate. The catalysed reaction is 1-(2-carboxyphenylamino)-1-deoxy-D-ribulose 5-phosphate + H(+) = (1S,2R)-1-C-(indol-3-yl)glycerol 3-phosphate + CO2 + H2O. It carries out the reaction chorismate + L-glutamine = anthranilate + pyruvate + L-glutamate + H(+). It participates in amino-acid biosynthesis; L-tryptophan biosynthesis; L-tryptophan from chorismate: step 1/5. It functions in the pathway amino-acid biosynthesis; L-tryptophan biosynthesis; L-tryptophan from chorismate: step 3/5. The protein operates within amino-acid biosynthesis; L-tryptophan biosynthesis; L-tryptophan from chorismate: step 4/5. In terms of biological role, trifunctional enzyme bearing the Gln amidotransferase (GATase) domain of anthranilate synthase, indole-glycerolphosphate synthase, and phosphoribosylanthranilate isomerase activities. In Phanerodontia chrysosporium (White-rot fungus), this protein is Multifunctional tryptophan biosynthesis protein (TRPC).